The primary structure comprises 555 residues: Potassium-transporting ATPase potassium-binding subunit (555 aa).

A run of 10 helical transmembrane segments spans residues 2–22 (IWVA…PTGI), 60–80 (QYAL…YFIF), 130–150 (IGIT…VMAF), 173–193 (VFLP…VPQT), 246–266 (MSNI…PFTY), 278–298 (ILFV…TTSE), 374–394 (AGFV…GLMV), 412–432 (LIAV…ALAL), 483–503 (LVMF…AASL), and 525–545 (GIFI…MLVL).

Belongs to the KdpA family. In terms of assembly, the system is composed of three essential subunits: KdpA, KdpB and KdpC.

It localises to the cell membrane. Functionally, part of the high-affinity ATP-driven potassium transport (or Kdp) system, which catalyzes the hydrolysis of ATP coupled with the electrogenic transport of potassium into the cytoplasm. This subunit binds the extracellular potassium ions and delivers the ions to the membrane domain of KdpB through an intramembrane tunnel. The polypeptide is Potassium-transporting ATPase potassium-binding subunit (Bacillus cereus (strain G9842)).